The primary structure comprises 313 residues: tRNA dimethylallyltransferase (313 aa).

11–18 (GPTAAGKS) provides a ligand contact to ATP. 13 to 18 (TAAGKS) contributes to the substrate binding site. 3 interaction with substrate tRNA regions span residues 36–39 (DSAT), 160–164 (QRIQR), and 244–249 (RCVGYR).

This sequence belongs to the IPP transferase family. Monomer. Mg(2+) is required as a cofactor.

It carries out the reaction adenosine(37) in tRNA + dimethylallyl diphosphate = N(6)-dimethylallyladenosine(37) in tRNA + diphosphate. In terms of biological role, catalyzes the transfer of a dimethylallyl group onto the adenine at position 37 in tRNAs that read codons beginning with uridine, leading to the formation of N6-(dimethylallyl)adenosine (i(6)A). This chain is tRNA dimethylallyltransferase, found in Bordetella parapertussis (strain 12822 / ATCC BAA-587 / NCTC 13253).